The chain runs to 1208 residues: Neural cell adhesion molecule L1-like protein (1208 aa).

A signal peptide spans 1 to 24 (MEPLLLGRGLIVYLMFLLLKFSKA). The Extracellular portion of the chain corresponds to 25-1082 (IEIPSSVQQV…LYDDISTQGW (1058 aa)). Ig-like C2-type domains are found at residues 35-124 (PTII…EEIE) and 128-223 (PSVP…MKLT). Disulfide bonds link cysteine 57–cysteine 109 and cysteine 153–cysteine 204. N-linked (GlcNAc...) asparagine glycans are attached at residues lysine 231 and asparagine 299. 4 consecutive Ig-like C2-type domains span residues 235–328 (PKLL…VIVE), 331–417 (PRWT…ANID), 423–510 (PLIQ…ANLD), and 515–607 (TKLR…TQVT). Intrachain disulfides connect cysteine 262–cysteine 310, cysteine 352–cysteine 401, cysteine 445–cysteine 494, and cysteine 536–cysteine 591. N-linked (GlcNAc...) asparagine glycosylation is found at asparagine 476 and asparagine 482. Residues 555 to 558 (DGEA) carry the DGEA motif. 2 N-linked (GlcNAc...) asparagine glycosylation sites follow: asparagine 562 and asparagine 580. Fibronectin type-III domains lie at 614–709 (PPEN…TPPA), 714–807 (NPQN…SGED), 809–914 (PDTA…TPEG), and 918–1015 (QPTF…LGEG). Residues 693–716 (GRSQPSQPSDHHETPPAAPDRNPQ) are disordered. Residues asparagine 767, asparagine 822, asparagine 945, and asparagine 1026 are each glycosylated (N-linked (GlcNAc...) asparagine). Residues 1083 to 1103 (FIGLMCAIALLTLLLLTVCFV) traverse the membrane as a helical segment. Over 1104–1208 (KRNRGGKYSV…SSTATFPLRA (105 aa)) the chain is Cytoplasmic. The interval 1131 to 1163 (ETFGEYSDSDEKPLKGSLRSLNRDMQPTESADS) is disordered. Phosphoserine occurs at positions 1147, 1160, and 1180. The segment covering 1149 to 1161 (RSLNRDMQPTESA) has biased composition (polar residues). An FIG[AQ]Y motif is present at residues 1181 to 1185 (FIGAY). The tract at residues 1189-1208 (KEKGSVESNGSSTATFPLRA) is disordered. The span at 1194-1208 (VESNGSSTATFPLRA) shows a compositional bias: polar residues.

Belongs to the immunoglobulin superfamily. L1/neurofascin/NgCAM family. As to quaternary structure, may interact with L1CAM. May interact with ITGB1/ITGA1 heterodimer and ITGB1/ITGA2 heterodimer as well as with ANK3. Post-translationally, cleavage by metalloprotease ADAM8 in the extracellular part generates 2 soluble forms (125 kDa and 165 kDa) in vitro and is inhibited by metalloprotease inhibitors. Cleaved by BACE1. N-glycosylated. Contains N-linked oligosaccharides with a sulfated carbohydrate structure type HNK-1 (SO4-3-GlcUABeta1,3GalBeta1,4GlcNAc). In terms of processing, O-glycosylated. Expressed in the fetal and adult brain as well as in Schwann cell culture. Also detected in adult peripheral tissues.

It is found in the cell membrane. Its subcellular location is the secreted. It localises to the extracellular space. The protein localises to the extracellular matrix. Its function is as follows. Extracellular matrix and cell adhesion protein that plays a role in nervous system development and in synaptic plasticity. Both soluble and membranous forms promote neurite outgrowth of cerebellar and hippocampal neurons and suppress neuronal cell death. Plays a role in neuronal positioning of pyramidal neurons and in regulation of both the number of interneurons and the efficacy of GABAergic synapses. May play a role in regulating cell migration in nerve regeneration and cortical development. Potentiates integrin-dependent cell migration towards extracellular matrix proteins. Recruits ANK3 to the plasma membrane. This chain is Neural cell adhesion molecule L1-like protein (CHL1), found in Homo sapiens (Human).